Consider the following 474-residue polypeptide: tRNA-2-methylthio-N(6)-dimethylallyladenosine synthase (474 aa).

The MTTase N-terminal domain maps to 3–120 (KKLHIKTWGC…LPEMINHVQG (118 aa)). The [4Fe-4S] cluster site is built by Cys-12, Cys-49, Cys-83, Cys-157, Cys-161, and Cys-164. The Radical SAM core domain maps to 143–375 (RAEGPTAFVS…QQRISQQAME (233 aa)). The region spanning 378–441 (RKMVGTVQRV…ASSLRGILLR (64 aa)) is the TRAM domain.

The protein belongs to the methylthiotransferase family. MiaB subfamily. As to quaternary structure, monomer. The cofactor is [4Fe-4S] cluster.

It is found in the cytoplasm. The catalysed reaction is N(6)-dimethylallyladenosine(37) in tRNA + (sulfur carrier)-SH + AH2 + 2 S-adenosyl-L-methionine = 2-methylsulfanyl-N(6)-dimethylallyladenosine(37) in tRNA + (sulfur carrier)-H + 5'-deoxyadenosine + L-methionine + A + S-adenosyl-L-homocysteine + 2 H(+). Catalyzes the methylthiolation of N6-(dimethylallyl)adenosine (i(6)A), leading to the formation of 2-methylthio-N6-(dimethylallyl)adenosine (ms(2)i(6)A) at position 37 in tRNAs that read codons beginning with uridine. The protein is tRNA-2-methylthio-N(6)-dimethylallyladenosine synthase of Yersinia pestis bv. Antiqua (strain Angola).